Consider the following 35-residue polypeptide: Photosystem II reaction center protein M (35 aa).

A helical membrane pass occupies residues 5–25 (ILAFVATALFILIPTAFLLIL).

This sequence belongs to the PsbM family. As to quaternary structure, PSII is composed of 1 copy each of membrane proteins PsbA, PsbB, PsbC, PsbD, PsbE, PsbF, PsbH, PsbI, PsbJ, PsbK, PsbL, PsbM, PsbT, PsbX, PsbY, PsbZ, Psb30/Ycf12, at least 3 peripheral proteins of the oxygen-evolving complex and a large number of cofactors. It forms dimeric complexes.

It is found in the plastid. The protein localises to the chloroplast thylakoid membrane. In terms of biological role, one of the components of the core complex of photosystem II (PSII). PSII is a light-driven water:plastoquinone oxidoreductase that uses light energy to abstract electrons from H(2)O, generating O(2) and a proton gradient subsequently used for ATP formation. It consists of a core antenna complex that captures photons, and an electron transfer chain that converts photonic excitation into a charge separation. This subunit is found at the monomer-monomer interface. This chain is Photosystem II reaction center protein M, found in Adiantum capillus-veneris (Maidenhair fern).